Here is an 872-residue protein sequence, read N- to C-terminus: Leucine--tRNA ligase (872 aa).

Residues 42–52 (PYPSGKLHMGH) carry the 'HIGH' region motif. Positions 632 to 636 (KMSKS) match the 'KMSKS' region motif. Lys635 is a binding site for ATP.

This sequence belongs to the class-I aminoacyl-tRNA synthetase family.

It is found in the cytoplasm. It carries out the reaction tRNA(Leu) + L-leucine + ATP = L-leucyl-tRNA(Leu) + AMP + diphosphate. This is Leucine--tRNA ligase from Chromobacterium violaceum (strain ATCC 12472 / DSM 30191 / JCM 1249 / CCUG 213 / NBRC 12614 / NCIMB 9131 / NCTC 9757 / MK).